The sequence spans 450 residues: UDP-N-acetylmuramoylalanine--D-glutamate ligase (450 aa).

119-125 (GSNGKTT) contributes to the ATP binding site.

This sequence belongs to the MurCDEF family.

The protein resides in the cytoplasm. The catalysed reaction is UDP-N-acetyl-alpha-D-muramoyl-L-alanine + D-glutamate + ATP = UDP-N-acetyl-alpha-D-muramoyl-L-alanyl-D-glutamate + ADP + phosphate + H(+). Its pathway is cell wall biogenesis; peptidoglycan biosynthesis. Cell wall formation. Catalyzes the addition of glutamate to the nucleotide precursor UDP-N-acetylmuramoyl-L-alanine (UMA). This Streptococcus pneumoniae (strain CGSP14) protein is UDP-N-acetylmuramoylalanine--D-glutamate ligase.